The following is a 77-amino-acid chain: Cell division topological specificity factor (77 aa).

Belongs to the MinE family.

Prevents the cell division inhibition by proteins MinC and MinD at internal division sites while permitting inhibition at polar sites. This ensures cell division at the proper site by restricting the formation of a division septum at the midpoint of the long axis of the cell. This chain is Cell division topological specificity factor, found in Helicobacter pylori (strain HPAG1).